The primary structure comprises 477 residues: ATP synthase subunit beta (477 aa).

Residue 155–162 coordinates ATP; that stretch reads GGAGVGKT.

Belongs to the ATPase alpha/beta chains family. As to quaternary structure, F-type ATPases have 2 components, CF(1) - the catalytic core - and CF(0) - the membrane proton channel. CF(1) has five subunits: alpha(3), beta(3), gamma(1), delta(1), epsilon(1). CF(0) has three main subunits: a(1), b(2) and c(9-12). The alpha and beta chains form an alternating ring which encloses part of the gamma chain. CF(1) is attached to CF(0) by a central stalk formed by the gamma and epsilon chains, while a peripheral stalk is formed by the delta and b chains.

The protein localises to the cell inner membrane. It carries out the reaction ATP + H2O + 4 H(+)(in) = ADP + phosphate + 5 H(+)(out). In terms of biological role, produces ATP from ADP in the presence of a proton gradient across the membrane. The catalytic sites are hosted primarily by the beta subunits. This is ATP synthase subunit beta from Mesorhizobium japonicum (strain LMG 29417 / CECT 9101 / MAFF 303099) (Mesorhizobium loti (strain MAFF 303099)).